We begin with the raw amino-acid sequence, 45 residues long: Large ribosomal subunit protein bL34 (45 aa).

Over residues 1–10 the composition is skewed to polar residues; it reads MTQRTLGGTN. Residues 1-45 form a disordered region; that stretch reads MTQRTLGGTNRKQKRTSGFRARMRKSNGRKVIQARRKKGRHRLSV. Residues 11–45 show a composition bias toward basic residues; it reads RKQKRTSGFRARMRKSNGRKVIQARRKKGRHRLSV.

Belongs to the bacterial ribosomal protein bL34 family.

The polypeptide is Large ribosomal subunit protein bL34 (Crocosphaera subtropica (strain ATCC 51142 / BH68) (Cyanothece sp. (strain ATCC 51142))).